The sequence spans 1273 residues: Paired amphipathic helix protein Sin3a (1273 aa).

2 disordered regions span residues 1–23 (MKRR…IPGS) and 87–110 (HPTA…PPVA). Residue serine 10 is modified to Phosphoserine. Residues 119–189 (QRLKVEDALS…MGFNTFLPPG (71 aa)) enclose the PAH 1 domain. The segment at 119-196 (QRLKVEDALS…PPGYKIEVQT (78 aa)) is interaction with HCFC1. Glycyl lysine isopeptide (Lys-Gly) (interchain with G-Cter in SUMO2) cross-links involve residues lysine 122 and lysine 134. Residues 205-297 (PGQVHQIPTH…ISLGTAPSLQ (93 aa)) are disordered. Positions 205-480 (PGQVHQIPTH…RKALRSAEAY (276 aa)) are interaction with REST. Over residues 228-237 (SQPSAQSAPA) the composition is skewed to low complexity. Residues 238–248 (PAQPAPQPPPA) are compositionally biased toward pro residues. Over residues 252 to 266 (KPSQLQAHTPASQQT) the composition is skewed to polar residues. Over residues 267–282 (PPLPPYASPRSPPVQP) the composition is skewed to pro residues. At serine 277 the chain carries Phosphoserine. Threonine 284 carries the post-translational modification Phosphothreonine. Over residues 284-297 (TPVTISLGTAPSLQ) the composition is skewed to polar residues. The 84-residue stretch at 300–383 (QPVEFNHAIN…SEFGQFLPDA (84 aa)) folds into the PAH 2 domain. Residues 398 to 446 (DSVRNDHGGTVKKPQLNNKPQRPSQNGCQIRRHPTGTTPPVKKKPKLLN) are disordered. A compositionally biased stretch (polar residues) spans 412–425 (QLNNKPQRPSQNGC). The PAH 3 domain occupies 456-525 (SKHGGGTESL…NWFKNFLGYK (70 aa)). Residues 458–525 (HGGGTESLFF…NWFKNFLGYK (68 aa)) are interaction with SAP30. An N6-acetyllysine modification is found at lysine 469. The interval 523 to 850 (GYKESVHLET…EMDVDEATGA (328 aa)) is interaction with NCOR1. The segment at 524–659 (YKESVHLETY…KFRLDNTLGG (136 aa)) is interaction with SUDS3 and SAP130. A Glycyl lysine isopeptide (Lys-Gly) (interchain with G-Cter in SUMO2) cross-link involves residue lysine 563. Residues 687 to 829 (NPSIAVPIVL…IPDLLFAQRG (143 aa)) are interaction with HDAC1 and ARID4B. A phosphoserine mark is found at serine 832 and serine 860. 2 positions are modified to N6-acetyllysine: lysine 865 and lysine 875. The interval 888-967 (VNNNWYIFMR…YYPAFLDMVR (80 aa)) is interaction with OGT. Residues 903–932 (CLRLLRICSQAERQIEEENREREWEREVLG) adopt a coiled-coil conformation. A phosphoserine mark is found at serine 940, serine 1089, and serine 1112. The disordered stretch occupies residues 1136 to 1156 (CQRGREQQEKEGKEGNSKKTM). Positions 1138 to 1156 (RGREQQEKEGKEGNSKKTM) are enriched in basic and acidic residues.

In terms of assembly, interacts with ARID4B, BRMS1L, HCFC1, HDAC1, HDAC2, MXI1, SAP30L, SAP130, SFPQ and TOPORS. Interacts with OGT (via TPRs 1-6); the interaction mediates transcriptional repression in parallel with histone deacetylase. Interacts with BAZ2A, MXD1, MXD3, MXD4, MBD2, DACH1, NCOR1, NR4A2, REST, RLIM, SAP30, SETDB1, SMYD2, and SUDS3. Interacts with PHF12 in a complex composed of HDAC1, PHF12 and SAP30. Interacts with TET1; the interaction recruits SIN3A to gene promoters. The large PER complex involved in the histone deacetylation is composed of at least HDAC1, PER2, SFPQ and SIN3A. Interacts with KLF11. Interacts with PPHLN1. Found in a complex with YY1, GON4L and HDAC1. Interacts (via PAH2) with FOXK1. Interacts with FOXK2. Found in a complex composed of at least SINHCAF, SIN3A, HDAC1, SAP30, RBBP4, OGT and TET1. Interacts with SINHCAF. Interacts with SPHK2. In terms of processing, SUMO1 sumoylated by TOPORS. Probably desumoylated by SENP2. In terms of tissue distribution, expressed in the developing brain, with highest levels of expression detected in the ventricular zone of various cortical regions.

The protein resides in the nucleus. It localises to the nucleolus. Acts as a transcriptional repressor. Corepressor for REST. Interacts with MXI1 to repress MYC responsive genes and antagonize MYC oncogenic activities. Also interacts with MXD1-MAX heterodimers to repress transcription by tethering SIN3A to DNA. Acts cooperatively with OGT to repress transcription in parallel with histone deacetylation. Involved in the control of the circadian rhythms. Required for the transcriptional repression of circadian target genes, such as PER1, mediated by the large PER complex through histone deacetylation. Cooperates with FOXK1 to regulate cell cycle progression probably by repressing cell cycle inhibitor genes expression. Required for cortical neuron differentiation and callosal axon elongation. The polypeptide is Paired amphipathic helix protein Sin3a (Homo sapiens (Human)).